Reading from the N-terminus, the 536-residue chain is B3 domain-containing protein Os03g0619800 (536 aa).

Positions 26-119 (MRCFLRRMAA…RYEVLILDSD (94 aa)) form a DNA-binding region, TF-B3 1. Residues 138–199 (DKTVDPVDSS…VEPQTPSGSD (62 aa)) form a disordered region. Low complexity-rich tracts occupy residues 145-160 (DSSG…SSRS) and 171-183 (SSSE…SPSG). The segment at residues 231-330 (VAVMKKCNLQ…AFTVHLLQAE (100 aa)) is a DNA-binding region (TF-B3 2). A disordered region spans residues 335-396 (RDGTDVHKIG…SDGPSEPPYI (62 aa)). Positions 344 to 355 (GSSQNKRNSKMA) are enriched in polar residues. Basic and acidic residues predominate over residues 372–382 (SNKHGVSHESL). The TF-B3 3 DNA-binding region spans 429–529 (ISKLAGSGGK…TMEVHIISNL (101 aa)).

The protein resides in the nucleus. The polypeptide is B3 domain-containing protein Os03g0619800 (Oryza sativa subsp. japonica (Rice)).